We begin with the raw amino-acid sequence, 431 residues long: Shaggy-related protein kinase beta (431 aa).

Over residues S12–E24 the composition is skewed to polar residues. Residues S12–I65 are disordered. Basic and acidic residues-rich tracts occupy residues E26–T39 and S46–I65. The 285-residue stretch at Y102–F386 folds into the Protein kinase domain. Residues I108–V116 and K131 contribute to the ATP site. Catalysis depends on D227, which acts as the Proton acceptor. Y262 bears the Phosphotyrosine mark.

Belongs to the protein kinase superfamily. CMGC Ser/Thr protein kinase family. GSK-3 subfamily. Autophosphorylated mainly on threonine and serine residues.

The catalysed reaction is L-seryl-[protein] + ATP = O-phospho-L-seryl-[protein] + ADP + H(+). The enzyme catalyses L-threonyl-[protein] + ATP = O-phospho-L-threonyl-[protein] + ADP + H(+). May mediate extracellular signals to regulate transcription in differentiating cells. The chain is Shaggy-related protein kinase beta from Arabidopsis thaliana (Mouse-ear cress).